Reading from the N-terminus, the 56-residue chain is Ribosome biogenesis protein Nop10 (56 aa).

This sequence belongs to the NOP10 family.

Functionally, involved in ribosome biogenesis; more specifically in 18S rRNA pseudouridylation and in cleavage of pre-rRNA. The protein is Ribosome biogenesis protein Nop10 of Saccharolobus islandicus (strain Y.N.15.51 / Yellowstone #2) (Sulfolobus islandicus).